We begin with the raw amino-acid sequence, 124 residues long: TP53-target gene 3 protein (124 aa).

A compositionally biased stretch (polar residues) spans 1-11 (MRASPCISQPA). The tract at residues 1–42 (MRASPCISQPAASWHPRPSALRPTAGSGPDTRTPGTVEDGSA) is disordered.

As to expression, strongly expressed in testis. Weakly expressed in heart, placenta and skeletal muscle.

The protein localises to the cytoplasm. Its subcellular location is the nucleus. Functionally, may play a significant role in p53/TP53-mediating signaling pathway. This Homo sapiens (Human) protein is TP53-target gene 3 protein.